Reading from the N-terminus, the 154-residue chain is MCWLRAWGQILLPVFLSLFLIQLLISFSENGFIHSPRNNQKPRDGNEEECAVKKSCQLCTEDKKCVWCSEEKACKKYCFPYFGCRFSSIYWLNCKVDMFGIMMLLLIAVLITGFVWYCCAYHFYLQDLNRNRVYFYGRRETVPIHDRSATVYDE.

Positions 1–26 (MCWLRAWGQILLPVFLSLFLIQLLIS) are cleaved as a signal peptide. Topologically, residues 27-97 (FSENGFIHSP…SIYWLNCKVD (71 aa)) are extracellular. Residues 98–118 (MFGIMMLLLIAVLITGFVWYC) traverse the membrane as a helical segment. Topologically, residues 119–154 (CAYHFYLQDLNRNRVYFYGRRETVPIHDRSATVYDE) are cytoplasmic.

It localises to the membrane. This chain is PTTG1IP family member 2, found in Homo sapiens (Human).